The primary structure comprises 355 residues: 3-dehydroquinate synthase (355 aa).

Residues 69–74 (DGEQHK), 103–107 (GVIGD), 127–128 (TT), Lys-140, Lys-149, and 167–170 (TLQT) contribute to the NAD(+) site. Zn(2+)-binding residues include Glu-182, His-245, and His-262.

It belongs to the sugar phosphate cyclases superfamily. Dehydroquinate synthase family. Requires Co(2+) as cofactor. Zn(2+) serves as cofactor. NAD(+) is required as a cofactor.

The protein resides in the cytoplasm. It catalyses the reaction 7-phospho-2-dehydro-3-deoxy-D-arabino-heptonate = 3-dehydroquinate + phosphate. It functions in the pathway metabolic intermediate biosynthesis; chorismate biosynthesis; chorismate from D-erythrose 4-phosphate and phosphoenolpyruvate: step 2/7. In terms of biological role, catalyzes the conversion of 3-deoxy-D-arabino-heptulosonate 7-phosphate (DAHP) to dehydroquinate (DHQ). The chain is 3-dehydroquinate synthase from Pseudoalteromonas atlantica (strain T6c / ATCC BAA-1087).